The primary structure comprises 281 residues: 3-mercaptopyruvate sulfurtransferase (281 aa).

2 consecutive Rhodanese domains span residues D17–E135 and H165–E278. R179 contacts substrate. The active-site Cysteine persulfide intermediate is C238. The substrate specificity stretch occupies residues C238–A244.

The protein localises to the cytoplasm. It carries out the reaction 2-oxo-3-sulfanylpropanoate + [thioredoxin]-dithiol = [thioredoxin]-disulfide + hydrogen sulfide + pyruvate + H(+). Its function is as follows. Catalyzes the transfer of sulfur from 3-mercaptopyruvate to a thiol-containing acceptor to form an intramolecular disulfide releasing hydrogen sulfide and pyruvate. The protein is 3-mercaptopyruvate sulfurtransferase (sseA) of Escherichia coli O157:H7.